The primary structure comprises 946 residues: Serine/arginine repetitive matrix protein 1 (946 aa).

An N-acetylmethionine modification is found at Met1. The necessary for DNA and RNA-binding stretch occupies residues 1–151; that stretch reads MDAGFFRGTS…ASLKKQDEDK (151 aa). The tract at residues 1-156 is necessary for mRNA 3'-end cleavage and cytoplasmic accumulation; it reads MDAGFFRGTS…QDEDKDKRDK (156 aa). At Arg7 the chain carries Citrulline. One can recognise a PWI domain in the interval 27 to 126; the sequence is QLKFAECLEK…AGIPSAFLEL (100 aa). Residue Lys127 forms a Glycyl lysine isopeptide (Lys-Gly) (interchain with G-Cter in SUMO2) linkage. Lys140 is modified (N6-acetyllysine). The span at 142-170 shows a compositional bias: basic and acidic residues; that stretch reads ASLKKQDEDKDKRDKEEKESSREKRERSR. Positions 142-946 are disordered; the sequence is ASLKKQDEDK…MRKAQVSPQS (805 aa). Basic residues predominate over residues 171–207; that stretch reads SPRRRKSRSPSPRRRSSPVRRERKRSHSRSPRHRTKS. Positions 214–234 are enriched in basic and acidic residues; that stretch reads PEKKEKSPELPEPSVRMKDSS. Residues Ser220 and Ser227 each carry the phosphoserine modification. Lys231 participates in a covalent cross-link: Glycyl lysine isopeptide (Lys-Gly) (interchain with G-Cter in SUMO1); alternate. Residue Lys231 forms a Glycyl lysine isopeptide (Lys-Gly) (interchain with G-Cter in SUMO2); alternate linkage. A phosphoserine mark is found at Ser234 and Ser240. Thr241 carries the phosphothreonine modification. The segment covering 246–273 has biased composition (basic and acidic residues); sequence KAPKPEPVPEPKEPSPEKNSKKEKEKTR. Lys249 participates in a covalent cross-link: Glycyl lysine isopeptide (Lys-Gly) (interchain with G-Cter in SUMO2). Phosphoserine is present on Ser260. 2 stretches are compositionally biased toward basic residues: residues 274–327 and 334–349; these read PRSR…RTPP and PRHRRSRSPGRRRRRS. The necessary for speckles and matrix localization stretch occupies residues 298-707; the sequence is RRHRSRSRSY…NKRHSPSPRP (410 aa). Residues 350-366 are compositionally biased toward low complexity; the sequence is SASLSGSSSSSSSSRSR. 4 positions are modified to phosphoserine: Ser387, Ser389, Ser391, and Ser400. Thr404 carries the phosphothreonine modification. Ser412 carries the post-translational modification Phosphoserine. Thr414 is subject to Phosphothreonine. Phosphoserine is present on residues Ser418, Ser427, Ser429, and Ser434. Residues 426-436 show a composition bias toward polar residues; sequence VSVSPGRTSGK. A Glycyl lysine isopeptide (Lys-Gly) (interchain with G-Cter in SUMO2) cross-link involves residue Lys445. Ser448 and Ser450 each carry phosphoserine. Lys457 participates in a covalent cross-link: Glycyl lysine isopeptide (Lys-Gly) (interchain with G-Cter in SUMO2). A phosphoserine mark is found at Ser461 and Ser463. Residue Lys470 forms a Glycyl lysine isopeptide (Lys-Gly) (interchain with G-Cter in SUMO2) linkage. Ser476 carries the post-translational modification Phosphoserine. A compositionally biased stretch (low complexity) spans 476 to 499; sequence SVQQRRQYRRQNQQSSSDSGSSST. A compositionally biased stretch (basic and acidic residues) spans 501-516; it reads EDERPKRSHVKNGEVG. Ser522, Ser524, Ser526, Ser528, Ser530, Ser561, Ser563, Ser572, and Ser574 each carry phosphoserine. Residues 555-572 show a composition bias toward basic residues; the sequence is SSRRRRSPSPPPARRRRS. Positions 574-585 are enriched in pro residues; it reads SPAPPPPPPPPP. Positions 586-611 are enriched in basic residues; that stretch reads PRRRRSPTPPPRRRTPSPPPRRRSPS. 2 positions are modified to phosphothreonine: Thr593 and Thr600. Residue Ser602 is modified to Phosphoserine. Residues 612–624 show a composition bias toward low complexity; the sequence is PRRYSPPIQRRYS. Tyr615 bears the Phosphotyrosine mark. A phosphoserine mark is found at Ser616, Ser624, and Ser626. A Phosphothreonine modification is found at Thr633. Residues Ser635, Ser645, Ser647, Ser655, and Ser657 each carry the phosphoserine modification. Over residues 640 to 655 the composition is skewed to basic residues; the sequence is PKRRASPSPPPKRRVS. Over residues 668–682 the composition is skewed to basic residues; that stretch reads TKRRSPSLSSKHRKG. The segment covering 704 to 718 has biased composition (pro residues); it reads SPRPRAPQTSSPPPV. Phosphoserine occurs at positions 713, 714, 723, 725, 731, and 733. Polar residues predominate over residues 724–736; it reads ASPQGRQSPSPST. The residue at position 736 (Thr736) is a Phosphothreonine. 10 positions are modified to phosphoserine: Ser779, Ser781, Ser789, Ser793, Ser795, Ser797, Ser810, Ser814, Ser816, and Ser818. The span at 779–800 shows a compositional bias: low complexity; the sequence is SPSPQSVRRVSSSRSVSGSPEP. Phosphothreonine is present on Thr819. 2 positions are modified to phosphoserine: Ser822 and Ser832. Residues 833-842 show a composition bias toward polar residues; that stretch reads PTPSLSPARN. Residue Thr834 is modified to Phosphothreonine. Phosphoserine is present on residues Ser836, Ser838, and Ser843. Basic residues predominate over residues 850 to 875; the sequence is KKKKKKKDKKHKKDKKHKKHKKHKKE. The span at 878–907 shows a compositional bias: low complexity; it reads VTIATPATAAPAAVSAATTTSAQEEPAAAP. The residue at position 913 (Thr913) is a Phosphothreonine. Ser915 is modified (phosphoserine). A compositionally biased stretch (basic and acidic residues) spans 924–934; it reads DLERHLREKAL. The residue at position 943 (Ser943) is a Phosphoserine.

It belongs to the splicing factor SR family. Identified in the spliceosome C complex. Found in a pre-mRNA splicing complex with SFRS4, SFRS5, SNRP70, SNRPA1, SRRM1 and SRRM2. Component of the minor spliceosome, which splices U12-type introns. Found in a pre-mRNA exonic splicing enhancer (ESE) complex with SNRP70, SNRPA1, SRRM1 and TRA2B/SFRS10. Found in a mRNA splicing-dependent exon junction complex (EJC) with DEK, PRPF8, NCBP1, RBM8A, RNPS1, SRRM1 and ALYREF/THOC4. Interacts with DDX39B, CPSF1, RBM8A, RNPS1, and ALYREF/THOC4. Seems to be a compound of RNA export complexes that are released from speckles in a ATP-dependent manner. Post-translationally, citrullinated by PADI4. Phosphorylated on multiple serine and threonine residues by DYRK3 during the G2-to-M transition, after the nuclear-envelope breakdown. Phosphorylation by DYRK3 promotes disassembly of nuclear speckles.

It localises to the nucleus matrix. The protein localises to the nucleus speckle. Functionally, part of pre- and post-splicing multiprotein mRNP complexes. As a component of the minor spliceosome, involved in the splicing of U12-type introns in pre-mRNAs. Involved in numerous pre-mRNA processing events. Promotes constitutive and exonic splicing enhancer (ESE)-dependent splicing activation by bridging together sequence-specific (SR family proteins, SFRS4, SFRS5 and TRA2B/SFRS10) and basal snRNP (SNRP70 and SNRPA1) factors of the spliceosome. Stimulates mRNA 3'-end cleavage independently of the formation of an exon junction complex. Binds both pre-mRNA and spliced mRNA 20-25 nt upstream of exon-exon junctions. Binds RNA and DNA with low sequence specificity and has similar preference for either double- or single-stranded nucleic acid substrates. The chain is Serine/arginine repetitive matrix protein 1 (Srrm1) from Mus musculus (Mouse).